The sequence spans 868 residues: Lysosomal cholesterol signaling protein (868 aa).

At 1-36 (MDSYFSAKNSTLAGDMNATWPASHGFNATGDPPSMS) the chain is on the lumenal side. Residues 1-368 (MDSYFSAKNS…SAWLLTFPTM (368 aa)) form a PIN-like transporter region. Asn9, Asn17, and Asn27 each carry an N-linked (GlcNAc...) asparagine glycan. The chain crosses the membrane as a helical span at residues 37 to 57 (ITRLFPALLECFGIVLCGYIA). Phe41 and Tyr55 together coordinate cholesterol. The Cytoplasmic portion of the chain corresponds to 58 to 77 (GRANIITSTQAKGLGNFVSR). A helical transmembrane segment spans residues 78 to 98 (FALPALLFKNMVVLNFSNVDW). Residues 99 to 102 (AFLY) lie on the Lumenal side of the membrane. The chain crosses the membrane as a helical span at residues 103-123 (SVLIGKASVFFIVCVLTLLVA). Over 124–131 (SPESRFSK) the chain is Cytoplasmic. A discontinuously helical transmembrane segment spans residues 132 to 152 (AGLFPIFATQSNDFALGYPIV). Residues 153-165 (EALYQSTYPEYLQ) are Lumenal-facing. Residues 166 to 186 (YIYLVAPISLMMLNPIGFIFC) form a helical membrane-spanning segment. At 187-211 (EIQKSKDTQNASQNKAKIVGLGFLR) the chain is on the cytoplasmic side. The chain crosses the membrane as a discontinuously helical span at residues 212–232 (VLQNPIVFMVFVGIAFNFILD). Residues 233 to 241 (KKIPVYMEN) lie on the Lumenal side of the membrane. Residues 242–262 (FLDGLANSFSGSALFYLGLTM) form a discontinuously helical membrane-spanning segment. Residues 263–271 (VGKIRRLKK) lie on the Cytoplasmic side of the membrane. Gly264, Lys265, and Ile266 together coordinate cholesterol. The chain crosses the membrane as a helical span at residues 272 to 292 (SAFVVLTLLITAKLLVLPLLC). Residues 293–313 (REMVELLDKGDSVVNHTSLSN) are Lumenal-facing. Residue Asn307 is glycosylated (N-linked (GlcNAc...) asparagine). Residues 314 to 334 (YAFLYGVFPVAPGVAIFATQF) traverse the membrane as a discontinuously helical segment. Topologically, residues 335-344 (NMEVEIITSG) are cytoplasmic. The helical transmembrane segment at 345 to 365 (MVISTFVSAPIMYVSAWLLTF) threads the bilayer. Over 366–379 (PTMDAKPLAYAIQN) the chain is Lumenal. The GPCR stretch occupies residues 378–715 (QNVSFDISII…FGIFGLDKHL (338 aa)). N-linked (GlcNAc...) asparagine glycosylation is present at Asn379. The helical transmembrane segment at 380–400 (VSFDISIISLVSLIWSLSILL) threads the bilayer. Residues 401–412 (LSKKYKQLPHML) are Cytoplasmic-facing. Residues 413–433 (TANLLIAQTIVCAGMMIWNFV) form a helical membrane-spanning segment. The Lumenal portion of the chain corresponds to 434-436 (KEK). Residues 437–457 (NFVGQILVFVLLYSSLYSTYL) traverse the membrane as a helical segment. Residues 458-478 (WTGLLAVSLFLLKKRESVQLP) lie on the Cytoplasmic side of the membrane. Residues 479–499 (VGIIIISGWGIPALLVGVLLI) form a helical membrane-spanning segment. At 500 to 518 (TGKHNGDSIDSAFFYGKEQ) the chain is on the lumenal side. A helical transmembrane segment spans residues 519–539 (MITTAVTLFCSILIAGVSLMC). Over 540-658 (MNRTTQAGHY…GDPQLTRHVL (119 aa)) the chain is Cytoplasmic. The interval 550 to 582 (EGFGQSQNHKPVEPGSTAFEENPAPTNEPELFP) is disordered. Arg655 serves as a coordination point for cholesterol. The helical transmembrane segment at 659 to 679 (LCLLLIIGLFANLSSCLWWLF) threads the bilayer. Residues 680 to 689 (NHETGRLYVE) are Lumenal-facing. The helical transmembrane segment at 690 to 710 (LQFFCAVFNFGQGFISFGIFG) threads the bilayer. Residues 711-868 (LDKHLIILPF…SSPPSVSPKT (158 aa)) are Cytoplasmic-facing. The region spanning 755-833 (YHRDLCIRNI…DEYLFYRFLQ (79 aa)) is the DEP domain. Residues 836–868 (PEQSPPARTLRDHQEESYKEIGHSSPPSVSPKT) form a disordered region. Residues 844–857 (TLRDHQEESYKEIG) are compositionally biased toward basic and acidic residues.

In terms of assembly, homodimer; via the transporter region and DEP domain. Interacts with the GATOR1 complex; preventing interaction between GATOR1 and KICSTOR; interaction is disrupted upon cholesterol starvation. Widely expressed in adult tissues and during development. In brain, widely distributed in forebrain regions, while it shows a more restricted distribution in the midbrain and hindbrain regions. Expressed at highest level in the lateral part of striatum and hippocampus.

The protein localises to the lysosome membrane. In terms of biological role, cholesterol-binding protein that acts as a regulator of mTORC1 signaling pathway. Acts as a sensor of cholesterol to signal cholesterol sufficiency to mTORC1: in presence of cholesterol, binds cholesterol, leading to disruption of the interaction between the GATOR1 and KICSTOR complexes and promotion of mTORC1 signaling. Upon cholesterol starvation, GPR155/LYCHOS is unable to perturb the association between GATOR1 and KICSTOR, leading to mTORC1 signaling inhibition. Binds indole-3-acetic acid and may play a role in tryptophan metabolism. The chain is Lysosomal cholesterol signaling protein from Mus musculus (Mouse).